Consider the following 187-residue polypeptide: Elongation factor P (187 aa).

The protein belongs to the elongation factor P family.

The protein localises to the cytoplasm. The protein operates within protein biosynthesis; polypeptide chain elongation. Involved in peptide bond synthesis. Stimulates efficient translation and peptide-bond synthesis on native or reconstituted 70S ribosomes in vitro. Probably functions indirectly by altering the affinity of the ribosome for aminoacyl-tRNA, thus increasing their reactivity as acceptors for peptidyl transferase. The chain is Elongation factor P from Desulfatibacillum aliphaticivorans.